The chain runs to 858 residues: DNA mismatch repair protein MutS (858 aa).

602–609 (GPNMSGKS) lines the ATP pocket.

It belongs to the DNA mismatch repair MutS family.

Functionally, this protein is involved in the repair of mismatches in DNA. It is possible that it carries out the mismatch recognition step. This protein has a weak ATPase activity. Overexpression of mutSL partially suppresses the high spontaneous mutation frequency of a ytkD/mutM/mutY triple disruption which lacks the system required to prevent damage by oxidized guanine (8-oxo-dGTP). This suggests that MutSL also functions to repair mismatches due to oxidative stress in both growing and stationary phase cells. This chain is DNA mismatch repair protein MutS, found in Bacillus subtilis (strain 168).